The primary structure comprises 698 residues: Capon-like protein (698 aa).

The PID domain occupies 25–194 (FFHGITFQAK…SELLDVEQIS (170 aa)). The interval 191-240 (EQISEQQLSEDGERGGGDNETPKKEHLAITPDLNHTQPQRPNHLDIMPSH) is disordered. The span at 201 to 217 (DGERGGGDNETPKKEHL) shows a compositional bias: basic and acidic residues. Coiled coils occupy residues 265 to 327 (RSEI…LASL), 379 to 484 (NQQL…LNAN), and 554 to 583 (LNED…GNLA). A compositionally biased stretch (low complexity) spans 396–423 (SQHLQNLQQQQQQQQQQQQQQTQAAPTA). The interval 396-460 (SQHLQNLQQQ…QQQQQQQQDA (65 aa)) is disordered. The span at 436-447 (YPSMSALQSISN) shows a compositional bias: polar residues. The span at 448–458 (QLQQQQQQQQQ) shows a compositional bias: low complexity. The interval 588-698 (GGSTSTRDTS…RTTWARHTTK (111 aa)) is disordered. Over residues 590-640 (STSTRDTSRSSSTLDSPSSPRLRSSNNNISPGSSNGNQNHNNNSNSNSSSS) the composition is skewed to low complexity. 2 stretches are compositionally biased toward polar residues: residues 662-672 (LSATPSFITRS) and 679-698 (NRSQ…HTTK).

Expressed at higher level in wing imaginal disk.

Its function is as follows. Putative adapter protein. This is Capon-like protein from Drosophila melanogaster (Fruit fly).